An 88-amino-acid polypeptide reads, in one-letter code: Small ribosomal subunit protein uS17 (88 aa).

This sequence belongs to the universal ribosomal protein uS17 family. As to quaternary structure, part of the 30S ribosomal subunit.

One of the primary rRNA binding proteins, it binds specifically to the 5'-end of 16S ribosomal RNA. In Prochlorococcus marinus (strain MIT 9303), this protein is Small ribosomal subunit protein uS17.